We begin with the raw amino-acid sequence, 442 residues long: Exodeoxyribonuclease 7 large subunit (442 aa).

This sequence belongs to the XseA family. As to quaternary structure, heterooligomer composed of large and small subunits.

Its subcellular location is the cytoplasm. It carries out the reaction Exonucleolytic cleavage in either 5'- to 3'- or 3'- to 5'-direction to yield nucleoside 5'-phosphates.. Its function is as follows. Bidirectionally degrades single-stranded DNA into large acid-insoluble oligonucleotides, which are then degraded further into small acid-soluble oligonucleotides. In Shewanella woodyi (strain ATCC 51908 / MS32), this protein is Exodeoxyribonuclease 7 large subunit.